Reading from the N-terminus, the 611-residue chain is Chaperone protein DnaK (611 aa).

Thr173 carries the phosphothreonine; by autocatalysis modification. Residues Ala579–Ala592 are compositionally biased toward low complexity. Residues Ala579 to Asn598 form a disordered region.

It belongs to the heat shock protein 70 family.

Its function is as follows. Acts as a chaperone. The chain is Chaperone protein DnaK from Bacillus cereus (strain B4264).